A 105-amino-acid chain; its full sequence is Cell division protein FtsB (105 aa).

At 1 to 3 (MGK) the chain is on the cytoplasmic side. Residues 4–21 (LTLLLLVLLGWLQYSLWL) form a helical membrane-spanning segment. Residues 22–105 (GKNGVHDLVR…PAAPATQDNQ (84 aa)) are Periplasmic-facing. Residues 28-62 (DLVRVESDVAAQQSNNAQLKARNDQLFAEIDDLNG) are a coiled coil.

The protein belongs to the FtsB family. Part of a complex composed of FtsB, FtsL and FtsQ.

It is found in the cell inner membrane. In terms of biological role, essential cell division protein. May link together the upstream cell division proteins, which are predominantly cytoplasmic, with the downstream cell division proteins, which are predominantly periplasmic. This chain is Cell division protein FtsB, found in Sodalis glossinidius (strain morsitans).